A 178-amino-acid polypeptide reads, in one-letter code: Large ribosomal subunit protein uL6 (178 aa).

The protein belongs to the universal ribosomal protein uL6 family. As to quaternary structure, part of the 50S ribosomal subunit.

In terms of biological role, this protein binds to the 23S rRNA, and is important in its secondary structure. It is located near the subunit interface in the base of the L7/L12 stalk, and near the tRNA binding site of the peptidyltransferase center. This is Large ribosomal subunit protein uL6 from Clavibacter sepedonicus (Clavibacter michiganensis subsp. sepedonicus).